Consider the following 403-residue polypeptide: GTPase Obg (403 aa).

The 159-residue stretch at 1–159 (MKFIDESLIR…RDLLLELMLL (159 aa)) folds into the Obg domain. An OBG-type G domain is found at 160–333 (ADVGMLGFPN…LCRDIMDFII (174 aa)). Residues 166–173 (GFPNAGKS), 191–195 (FTTLV), 213–216 (DIPG), 283–286 (NKID), and 314–316 (SAA) each bind GTP. Mg(2+)-binding residues include Ser-173 and Thr-193. The tract at residues 363–403 (EYQFDDDEDWDDDWTEEDDDEDWDDDWTEEDDEGIEFIYKP) is disordered. Positions 365–397 (QFDDDEDWDDDWTEEDDDEDWDDDWTEEDDEGI) are enriched in acidic residues.

Belongs to the TRAFAC class OBG-HflX-like GTPase superfamily. OBG GTPase family. In terms of assembly, monomer. The cofactor is Mg(2+).

Its subcellular location is the cytoplasm. In terms of biological role, an essential GTPase which binds GTP, GDP and possibly (p)ppGpp with moderate affinity, with high nucleotide exchange rates and a fairly low GTP hydrolysis rate. Plays a role in control of the cell cycle, stress response, ribosome biogenesis and in those bacteria that undergo differentiation, in morphogenesis control. The protein is GTPase Obg of Haemophilus influenzae (strain PittEE).